The chain runs to 208 residues: Uridine kinase (208 aa).

12–19 lines the ATP pocket; it reads GGSGGGKT.

This sequence belongs to the uridine kinase family.

The protein resides in the cytoplasm. It catalyses the reaction uridine + ATP = UMP + ADP + H(+). The catalysed reaction is cytidine + ATP = CMP + ADP + H(+). It functions in the pathway pyrimidine metabolism; CTP biosynthesis via salvage pathway; CTP from cytidine: step 1/3. The protein operates within pyrimidine metabolism; UMP biosynthesis via salvage pathway; UMP from uridine: step 1/1. The protein is Uridine kinase of Streptococcus pyogenes serotype M3 (strain ATCC BAA-595 / MGAS315).